Consider the following 1268-residue polypeptide: Meiosis inhibitor protein 1 (1268 aa).

As to expression, strongly expressed in testis, weakly in brain, and not detected in spleen, liver, kidney, small intestine or colon.

Its function is as follows. Required for normal meiotic chromosome synapsis. May be involved in the formation of meiotic double-strand breaks (DSBs) in spermatocytes. The chain is Meiosis inhibitor protein 1 from Mus musculus (Mouse).